Consider the following 880-residue polypeptide: Pentatricopeptide repeat-containing protein At3g07290, mitochondrial (880 aa).

Residues 1-89 constitute a mitochondrion transit peptide; sequence MLLIHIRSTR…RSDNDICVRF (89 aa). PPR repeat units lie at residues 159–193, 194–228, 229–259, 265–299, 300–334, 335–369, 370–404, 405–439, 440–474, 475–509, 510–544, 545–579, 580–614, 615–649, 650–684, 685–721, 738–768, 772–806, and 807–842; these read NYPCYSSLLMSLAKLDLGFLAYVTYRRMEADGFVV, GMIDYRTIVNALCKNGYTEAAEMFMSKILKIGFVL, DSHIGTSLLLGFCRGLNLRDALKVFDVMSKE, NSVSYSILIHGLCEVGRLEEAFGLKDQMGEKGCQP, STRTYTVLIKALCDRGLIDKAFNLFDEMIPRGCKP, NVHTYTVLIDGLCRDGKIEEANGVCRKMVKDRIFP, SVITYNALINGYCKDGRVVPAFELLTVMEKRACKP, NVRTFNELMEGLCRVGKPYKAVHLLKRMLDNGLSP, DIVSYNVLIDGLCREGHMNTAYKLLSSMNCFDIEP, DCLTFTAIINAFCKQGKADVASAFLGLMLRKGISL, DEVTGTTLIDGVCKVGKTRDALFILETLVKMRILT, TPHSLNVILDMLSKGCKVKEELAMLGKINKLGLVP, SVVTYTTLVDGLIRSGDITGSFRILELMKLSGCLP, NVYPYTIIINGLCQFGRVEEAEKLLSAMQDSGVSP, NHVTYTVMVKGYVNNGKLDRALETVRAMVERGYEL, NDRIYSSLLQGFVLSQKGIDNSEESTVSDIALRETDP, ISGLCIFLVTRLCKEGRTDESNDLVQNVLER, LEKAMDIIMESYCSKKKHTKCMELITLVLKSGFVP, and SFKSFCLVIQGLKKEGDAERARELVMELLTSNGVVE.

Belongs to the PPR family. P subfamily.

The protein resides in the mitochondrion. This chain is Pentatricopeptide repeat-containing protein At3g07290, mitochondrial, found in Arabidopsis thaliana (Mouse-ear cress).